A 719-amino-acid chain; its full sequence is Polyribonucleotide nucleotidyltransferase (719 aa).

Mg(2+) is bound by residues Asp-491 and Asp-497. Residues Pro-558–Ile-617 enclose the KH domain. Positions Gly-627–Lys-695 constitute an S1 motif domain.

Belongs to the polyribonucleotide nucleotidyltransferase family. Requires Mg(2+) as cofactor.

Its subcellular location is the cytoplasm. The catalysed reaction is RNA(n+1) + phosphate = RNA(n) + a ribonucleoside 5'-diphosphate. In terms of biological role, involved in mRNA degradation. Catalyzes the phosphorolysis of single-stranded polyribonucleotides processively in the 3'- to 5'-direction. The polypeptide is Polyribonucleotide nucleotidyltransferase (Bordetella bronchiseptica (strain ATCC BAA-588 / NCTC 13252 / RB50) (Alcaligenes bronchisepticus)).